Here is an 88-residue protein sequence, read N- to C-terminus: Putative septation protein SpoVG (88 aa).

This sequence belongs to the SpoVG family.

In terms of biological role, could be involved in septation. This is Putative septation protein SpoVG from Caldicellulosiruptor saccharolyticus (strain ATCC 43494 / DSM 8903 / Tp8T 6331).